The chain runs to 310 residues: Acetylglutamate kinase (310 aa).

Residues 79–80, R101, and N206 each bind substrate; that span reads GG.

This sequence belongs to the acetylglutamate kinase family. ArgB subfamily.

It is found in the cytoplasm. It catalyses the reaction N-acetyl-L-glutamate + ATP = N-acetyl-L-glutamyl 5-phosphate + ADP. It participates in amino-acid biosynthesis; L-arginine biosynthesis; N(2)-acetyl-L-ornithine from L-glutamate: step 2/4. In terms of biological role, catalyzes the ATP-dependent phosphorylation of N-acetyl-L-glutamate. The polypeptide is Acetylglutamate kinase (Rhodospirillum rubrum (strain ATCC 11170 / ATH 1.1.1 / DSM 467 / LMG 4362 / NCIMB 8255 / S1)).